A 969-amino-acid chain; its full sequence is Translation initiation factor IF-2 (969 aa).

The segment covering 49–63 has biased composition (basic and acidic residues); it reads HLRKSHGATDGDKRK. 3 disordered regions span residues 49–85, 100–128, and 143–380; these read HLRK…KART, DDVS…REEE, and LRER…SFQA. A compositionally biased stretch (low complexity) spans 105–114; that stretch reads VAEQGQAQVA. Residues 143-181 show a composition bias toward basic and acidic residues; the sequence is LRERQERLEREEAERRAREEAAEAERRRAEEEAAAKRAA. Low complexity predominate over residues 182–206; it reads AEAAAAQQAAQQAAAAQQAAAPADS. The segment covering 209 to 260 has biased composition (basic and acidic residues); that stretch reads DEARAAAERAAQREAAKKAEDAAREAAEKARAEQEEIRKRREAAEAEARAIR. The span at 301 to 323 shows a compositional bias: low complexity; the sequence is AQARPAAKKPAAAPAATPAPAGA. The span at 353–366 shows a compositional bias: gly residues; sequence SSGGVDRGWRGGPK. Residues 469–638 enclose the tr-type G domain; that stretch reads PRPPVVTVMG…LLQAEVLELK (170 aa). The interval 478–485 is G1; sequence GHVDHGKT. 478–485 serves as a coordination point for GTP; sequence GHVDHGKT. Residues 503–507 are G2; that stretch reads GITQH. Residues 524 to 527 form a G3 region; the sequence is DTPG. Residues 524–528 and 578–581 each bind GTP; these read DTPGH and NKID. The tract at residues 578-581 is G4; the sequence is NKID. The tract at residues 614 to 616 is G5; it reads SAK.

This sequence belongs to the TRAFAC class translation factor GTPase superfamily. Classic translation factor GTPase family. IF-2 subfamily.

Its subcellular location is the cytoplasm. Its function is as follows. One of the essential components for the initiation of protein synthesis. Protects formylmethionyl-tRNA from spontaneous hydrolysis and promotes its binding to the 30S ribosomal subunits. Also involved in the hydrolysis of GTP during the formation of the 70S ribosomal complex. This chain is Translation initiation factor IF-2, found in Burkholderia multivorans (strain ATCC 17616 / 249).